We begin with the raw amino-acid sequence, 113 residues long: Histone H3-8 (113 aa).

The segment covering 1-17 has biased composition (basic residues); sequence NTGAKAPRKHLANKAAR. Residues 1-31 are disordered; the sequence is NTGAKAPRKHLANKAARKTAAPANAGIKKPH.

This sequence belongs to the histone H3 family. In terms of assembly, the nucleosome is a histone octamer containing two molecules each of H2A, H2B, H3 and H4 assembled in one H3-H4 heterotetramer and two H2A-H2B heterodimers. The octamer wraps approximately 147 bp of DNA.

Its subcellular location is the nucleus. The protein localises to the chromosome. In terms of biological role, core component of nucleosome. Nucleosomes wrap and compact DNA into chromatin, limiting DNA accessibility to the cellular machineries which require DNA as a template. Histones thereby play a central role in transcription regulation, DNA repair, DNA replication and chromosomal stability. DNA accessibility is regulated via a complex set of post-translational modifications of histones, also called histone code, and nucleosome remodeling. This chain is Histone H3-8 (H3-8), found in Stylonychia lemnae (Ciliate).